Here is a 437-residue protein sequence, read N- to C-terminus: Adenylosuccinate synthetase (437 aa).

GTP is bound by residues 12–18 (GDEGKGK) and 40–42 (GHT). Catalysis depends on Asp13, which acts as the Proton acceptor. Residues Asp13 and Gly40 each contribute to the Mg(2+) site. Residues 13–16 (DEGK), 38–41 (NAGH), Thr128, Arg142, Gln223, Thr238, and Arg302 contribute to the IMP site. His41 (proton donor) is an active-site residue. Substrate is bound at residue 298 to 304 (TTTGRRR). Residues Arg304, 330–332 (KLD), and 412–414 (SLG) contribute to the GTP site.

It belongs to the adenylosuccinate synthetase family. Homodimer. It depends on Mg(2+) as a cofactor.

It is found in the cytoplasm. The enzyme catalyses IMP + L-aspartate + GTP = N(6)-(1,2-dicarboxyethyl)-AMP + GDP + phosphate + 2 H(+). Its pathway is purine metabolism; AMP biosynthesis via de novo pathway; AMP from IMP: step 1/2. Functionally, plays an important role in the de novo pathway of purine nucleotide biosynthesis. Catalyzes the first committed step in the biosynthesis of AMP from IMP. The chain is Adenylosuccinate synthetase from Parasynechococcus marenigrum (strain WH8102).